Here is a 1108-residue protein sequence, read N- to C-terminus: Unconventional myosin-Ie (1108 aa).

Residues 19-692 (SGVDDMVLLS…SLFLLEEMRE (674 aa)) enclose the Myosin motor domain. An ATP-binding site is contributed by 112-119 (GESGAGKT). The tract at residues 581–591 (PHYIRCIKPNE) is actin-binding. The IQ domain maps to 695–724 (YDGYARVIQKSWRKFVARKKYVQMREEASD). A TH1 domain is found at 730 to 922 (KERRRNSINR…NKVLQVSIGP (193 aa)). Residues 919-966 (SIGPGLPKNSRPTRRNTTQNTGYSSGTQNANYPVRAAPPPPGYHQNGV) are disordered. Residues 933–949 (RNTTQNTGYSSGTQNAN) are compositionally biased toward polar residues. A phosphoserine mark is found at Ser980 and Ser1002. The tract at residues 993 to 1053 (ARPPLPRQQS…KPQPKPKPQV (61 aa)) is disordered. Residues 999-1013 (RQQSTSSDRVSQTPE) show a composition bias toward polar residues. The span at 1035–1052 (RPPPAGGRPKPQPKPKPQ) shows a compositional bias: pro residues. One can recognise an SH3 domain in the interval 1051–1108 (PQVPQCKALYAYDAQDTDELSFNANDIIDIIKEDPSGWWTGRLRGKQGLFPNNYVTKI).

The protein belongs to the TRAFAC class myosin-kinesin ATPase superfamily. Myosin family. As to quaternary structure, interacts with CALM and F-actin. Interacts (via SH3 domain) with SYNJ1, DNM1 and DNM2. Interacts with ARL14EP. Interacts with CARMIL1. In terms of tissue distribution, expressed in the immune system. In the kidney, predominantly expressed in the glomerulus, including podocytes.

Its subcellular location is the cytoplasm. It localises to the cytoskeleton. It is found in the cytoplasmic vesicle. The protein localises to the clathrin-coated vesicle. The protein resides in the cell junction. Functionally, actin-based motor molecule with ATPase activity. Unconventional myosins serve in intracellular movements. Their highly divergent tails bind to membranous compartments, which are then moved relative to actin filaments. Binds to membranes containing anionic phospholipids via its tail domain. Involved in clathrin-mediated endocytosis and intracellular movement of clathrin-coated vesicles. Required for normal morphology of the glomerular basement membrane, normal development of foot processes by kidney podocytes and normal kidney function. In dendritic cells, may control the movement of class II-containing cytoplasmic vesicles along the actin cytoskeleton by connecting them with the actin network via ARL14EP and ARL14. The chain is Unconventional myosin-Ie (MYO1E) from Homo sapiens (Human).